The following is a 400-amino-acid chain: MTQFASPVLHSLLDTDAYKLHMQQAVFHHYYDVQVAAEFRCRDDDLLGIYADAIREQVDAMQHLRLQEDEFQWLSGLPFFKPDYLNWLREFRYNPAQVCVTNDNGKLNIRLTGPWREVIMWEVPLLAVISELVHHYRSPNAGVDQALDALESKLVDFTALTANLDMSRFHLMDFGTRRRFSREVQQAIVKRLQQESWFVGTSNYDLARRLALTPMGTQAHEWFQAHQQISPDLATSQRAALAAWLNEYPDQLGIALTDCITMDAFLRDFGIEFASRYQGLRHDSGDPVAWGEKAIAHYEKLGIDPLTKTLVFSDNLDLPKAVELYRHFASRVQLSFGIGTRLTCDIPQVKPLNIVIKLVECNGKPVAKLSDSPGKTICHDKAFVRALRKAFDLPQVRKAS.

Residue His-220 is modified to Phosphohistidine; by autocatalysis.

The protein belongs to the NAPRTase family. In terms of processing, transiently phosphorylated on a His residue during the reaction cycle. Phosphorylation strongly increases the affinity for substrates and increases the rate of nicotinate D-ribonucleotide production. Dephosphorylation regenerates the low-affinity form of the enzyme, leading to product release.

The enzyme catalyses nicotinate + 5-phospho-alpha-D-ribose 1-diphosphate + ATP + H2O = nicotinate beta-D-ribonucleotide + ADP + phosphate + diphosphate. It participates in cofactor biosynthesis; NAD(+) biosynthesis; nicotinate D-ribonucleotide from nicotinate: step 1/1. Functionally, catalyzes the synthesis of beta-nicotinate D-ribonucleotide from nicotinate and 5-phospho-D-ribose 1-phosphate at the expense of ATP. In Salmonella choleraesuis (strain SC-B67), this protein is Nicotinate phosphoribosyltransferase.